We begin with the raw amino-acid sequence, 383 residues long: Small ribosomal subunit protein mS31 (383 aa).

A mitochondrion-targeting transit peptide spans 1 to 21 (MLRSLCSIAVRLGGARQPRLL). The stretch at 158–187 (VNEAQIKLQEQRKALLNDVREKVEQEEVEE) forms a coiled coil.

This sequence belongs to the mitochondrion-specific ribosomal protein mS31 family. As to quaternary structure, component of the mitochondrial ribosome small subunit (28S) which comprises a 12S rRNA and about 30 distinct proteins.

The protein localises to the mitochondrion. The polypeptide is Small ribosomal subunit protein mS31 (mrps-31) (Caenorhabditis elegans).